A 195-amino-acid polypeptide reads, in one-letter code: Pyridoxal 5'-phosphate synthase subunit PdxT (195 aa).

46 to 48 (GES) serves as a coordination point for L-glutamine. Residue Cys78 is the Nucleophile of the active site. L-glutamine-binding positions include Arg106 and 134-135 (IR). Residues His170 and Glu172 each act as charge relay system in the active site.

This sequence belongs to the glutaminase PdxT/SNO family. In the presence of PdxS, forms a dodecamer of heterodimers. Only shows activity in the heterodimer.

The enzyme catalyses aldehydo-D-ribose 5-phosphate + D-glyceraldehyde 3-phosphate + L-glutamine = pyridoxal 5'-phosphate + L-glutamate + phosphate + 3 H2O + H(+). It catalyses the reaction L-glutamine + H2O = L-glutamate + NH4(+). It functions in the pathway cofactor biosynthesis; pyridoxal 5'-phosphate biosynthesis. Its function is as follows. Catalyzes the hydrolysis of glutamine to glutamate and ammonia as part of the biosynthesis of pyridoxal 5'-phosphate. The resulting ammonia molecule is channeled to the active site of PdxS. The protein is Pyridoxal 5'-phosphate synthase subunit PdxT of Pseudothermotoga lettingae (strain ATCC BAA-301 / DSM 14385 / NBRC 107922 / TMO) (Thermotoga lettingae).